The following is a 199-amino-acid chain: Probable GTP-binding protein EngB (199 aa).

An EngB-type G domain is found at 28 to 199 (DIPEIALAGR…QAWDAILEQI (172 aa)). GTP is bound by residues 36-43 (GRSNVGKS), 63-67 (GKTQL), 81-84 (DVPG), 148-151 (TKAD), and 180-182 (FSS). Residues S43 and T65 each coordinate Mg(2+).

The protein belongs to the TRAFAC class TrmE-Era-EngA-EngB-Septin-like GTPase superfamily. EngB GTPase family. It depends on Mg(2+) as a cofactor.

Functionally, necessary for normal cell division and for the maintenance of normal septation. This is Probable GTP-binding protein EngB from Streptococcus uberis (strain ATCC BAA-854 / 0140J).